A 92-amino-acid polypeptide reads, in one-letter code: Putative pterin-4-alpha-carbinolamine dehydratase 2 (92 aa).

It belongs to the pterin-4-alpha-carbinolamine dehydratase family.

It carries out the reaction (4aS,6R)-4a-hydroxy-L-erythro-5,6,7,8-tetrahydrobiopterin = (6R)-L-erythro-6,7-dihydrobiopterin + H2O. In Gloeobacter violaceus (strain ATCC 29082 / PCC 7421), this protein is Putative pterin-4-alpha-carbinolamine dehydratase 2.